Reading from the N-terminus, the 428-residue chain is Cytochrome c biogenesis protein CcsB (428 aa).

The next 3 membrane-spanning stretches (helical) occupy residues 14–34, 72–92, and 162–182; these read LRFAISLIIFIAIASGIGTFI, SFWFLFTLILLCISLAACSFR, and IGPLVVHIGLIVLLIGSAYGS.

This sequence belongs to the Ccs1/CcsB family. As to quaternary structure, may interact with CcsA.

The protein localises to the cellular thylakoid membrane. Functionally, required during biogenesis of c-type cytochromes (cytochrome c6 and cytochrome f) at the step of heme attachment. The protein is Cytochrome c biogenesis protein CcsB of Prochlorococcus marinus (strain AS9601).